The sequence spans 238 residues: MFNDLLSELTKNILEHGGKKLIVPNEFCECVSKQGNCKLNSWLWDVPGFRRWRVTRLDAGDRLQVLNSVAYPNEQNDMPIMGIDLLWFEKKQKLVAILDFQPLVQDKEYLDRYFDGLKSLKKSFNEFNSDMKSNIYDPTKYFSPWALFCKGGNFEAENILPKIFSSFLKCYWKNLDLSKANENHIKSQEVSILHIDYDKYSAEKDPAHGLFSGFFGKEWSEKYMKEFLFPLSLENINS.

It belongs to the HY2 family.

The catalysed reaction is 15,16-dihydrobiliverdin + oxidized 2[4Fe-4S]-[ferredoxin] = biliverdin IXalpha + reduced 2[4Fe-4S]-[ferredoxin] + 2 H(+). Catalyzes the two-electron reduction of biliverdin IX-alpha at the C15 methine bridge. The polypeptide is 15,16-dihydrobiliverdin:ferredoxin oxidoreductase (Prochlorococcus marinus (strain NATL1A)).